Consider the following 917-residue polypeptide: Protein translocase subunit SecA (917 aa).

ATP contacts are provided by residues glutamine 87, 105–109 (GEGKT), and aspartate 513. The segment at 834–917 (EEQMNEMEKR…YKSCHGKLTG (84 aa)) is disordered. The span at 839 to 852 (EMEKRRQEEAERQR) shows a compositional bias: basic and acidic residues. The span at 862–876 (APSQLAAPATPATPE) shows a compositional bias: low complexity. 4 residues coordinate Zn(2+): cysteine 900, cysteine 902, cysteine 911, and histidine 912.

It belongs to the SecA family. Monomer and homodimer. Part of the essential Sec protein translocation apparatus which comprises SecA, SecYEG and auxiliary proteins SecDF-YajC and YidC. The cofactor is Zn(2+).

Its subcellular location is the cell inner membrane. It is found in the cytoplasm. The enzyme catalyses ATP + H2O + cellular proteinSide 1 = ADP + phosphate + cellular proteinSide 2.. Functionally, part of the Sec protein translocase complex. Interacts with the SecYEG preprotein conducting channel. Has a central role in coupling the hydrolysis of ATP to the transfer of proteins into and across the cell membrane, serving both as a receptor for the preprotein-SecB complex and as an ATP-driven molecular motor driving the stepwise translocation of polypeptide chains across the membrane. This Saccharophagus degradans (strain 2-40 / ATCC 43961 / DSM 17024) protein is Protein translocase subunit SecA.